The primary structure comprises 623 residues: METVGRFQAGDYVVFACLFVVSSGIGVFFAIKERNKAPSKEFLVGGRQMSCGPVALSLTASFMSAVTVIGAPADVYRFGASYVIFGVAYTFVVFFTAELFLPVFYRSGITSTYEYLELRFCKLVRVAATLIYIIQTILYTGVVVYAPALALNQVTGFDLWGSIFATGIVCTFYCTLGGLKAVVWTDAFQMVVMVVGFLTVLIQGSSRAGGIENVWSTSRTGGRLQVFDFDVSPLRRHTFWTLSVGGTFTWLGIYGVNQSTIQRCISCKTEGHARWALYLNLLGLWIILFCAVVSGLIMYSYYSHCDPWSSGLISAPDQLMPYFVMEILGAFPGLPGLFVACAFSGTLSTVAASINALATVMYEDFVSQCFPDLSNRAASWISKALCVAFGVACTTMAVAASYMGGIVQAALSIHGMCGGPVLGLFSLGILFPFTNLKGAVGGLIVGISLSFWVGVGAFIYPAPSNNTHALELNTAGCNITAAAFEPTSATVTQLTSDRNWLADSWYSMSYLYYSAVGFIGTVAAGLLITLLTGPMDPKLLKPGMTRSVKEVMCFCTEKFTEADLGEGKEDVGDFGKAWEKHPDQGCTLRMDEKFRCSCDNQQENGNTNAGFDHNETSIVQKKL.

Residues 1–10 (METVGRFQAG) lie on the Extracellular side of the membrane. A helical transmembrane segment spans residues 11–31 (DYVVFACLFVVSSGIGVFFAI). The Cytoplasmic portion of the chain corresponds to 32 to 50 (KERNKAPSKEFLVGGRQMS). Residues 51-71 (CGPVALSLTASFMSAVTVIGA) traverse the membrane as a helical segment. Residues 72 to 83 (PADVYRFGASYV) are Extracellular-facing. A helical transmembrane segment spans residues 84 to 104 (IFGVAYTFVVFFTAELFLPVF). The Cytoplasmic segment spans residues 105–129 (YRSGITSTYEYLELRFCKLVRVAAT). The chain crosses the membrane as a helical span at residues 130–150 (LIYIIQTILYTGVVVYAPALA). Over 151 to 158 (LNQVTGFD) the chain is Extracellular. The helical transmembrane segment at 159 to 179 (LWGSIFATGIVCTFYCTLGGL) threads the bilayer. Residues 180–181 (KA) lie on the Cytoplasmic side of the membrane. The helical transmembrane segment at 182 to 202 (VVWTDAFQMVVMVVGFLTVLI) threads the bilayer. Residues 203-236 (QGSSRAGGIENVWSTSRTGGRLQVFDFDVSPLRR) lie on the Extracellular side of the membrane. A helical transmembrane segment spans residues 237-257 (HTFWTLSVGGTFTWLGIYGVN). The Cytoplasmic segment spans residues 258-276 (QSTIQRCISCKTEGHARWA). A helical membrane pass occupies residues 277–297 (LYLNLLGLWIILFCAVVSGLI). Residues 298-322 (MYSYYSHCDPWSSGLISAPDQLMPY) are Extracellular-facing. Residues 323–343 (FVMEILGAFPGLPGLFVACAF) form a helical membrane-spanning segment. The Cytoplasmic portion of the chain corresponds to 344-386 (SGTLSTVAASINALATVMYEDFVSQCFPDLSNRAASWISKALC). The chain crosses the membrane as a helical span at residues 387 to 407 (VAFGVACTTMAVAASYMGGIV). Residues 408–412 (QAALS) lie on the Extracellular side of the membrane. The helical transmembrane segment at 413 to 433 (IHGMCGGPVLGLFSLGILFPF) threads the bilayer. Over 434-438 (TNLKG) the chain is Cytoplasmic. Residues 439-459 (AVGGLIVGISLSFWVGVGAFI) traverse the membrane as a helical segment. The Extracellular segment spans residues 460-510 (YPAPSNNTHALELNTAGCNITAAAFEPTSATVTQLTSDRNWLADSWYSMSY). Asparagine 465 and asparagine 478 each carry an N-linked (GlcNAc...) asparagine glycan. A helical transmembrane segment spans residues 511 to 531 (LYYSAVGFIGTVAAGLLITLL). Over 532–623 (TGPMDPKLLK…NETSIVQKKL (92 aa)) the chain is Cytoplasmic.

It belongs to the sodium:solute symporter (SSF) (TC 2.A.21) family.

It localises to the apical cell membrane. It catalyses the reaction (S)-lactate(out) + Na(+)(out) = (S)-lactate(in) + Na(+)(in). The catalysed reaction is nicotinate(out) + Na(+)(out) = nicotinate(in) + Na(+)(in). The enzyme catalyses pyruvate(out) + Na(+)(out) = pyruvate(in) + Na(+)(in). It carries out the reaction propanoate(out) + Na(+)(out) = propanoate(in) + Na(+)(in). It catalyses the reaction butanoate(out) + Na(+)(out) = butanoate(in) + Na(+)(in). The catalysed reaction is acetoacetate(out) + Na(+)(out) = acetoacetate(in) + Na(+)(in). In terms of biological role, acts as an electroneutral and low-affinity sodium (Na(+))-dependent sodium-coupled solute transporter. Catalyzes the transport across the plasma membrane of many monocarboxylates such as lactate, pyruvate, nicotinate, propionate, butyrate and beta-D-hydroxybutyrate. This Danio rerio (Zebrafish) protein is Sodium-coupled monocarboxylate transporter 2 (slc5a12).